The primary structure comprises 382 residues: MKALHFGAGNIGRGFIGKLLADAGIQLTFADVNQVVLDALNARHSYQVHVVGENEQVDTVSGVNAVSSIGDDVVDLIAHVDLITTAVGPVVLERIAPAIAKGLVKRKAQGVDAPLNIIACENMVRGTTQLKGHVMNALADGDKAWVEQHVGFVDSAVDRIVPPSASATHDPLEVTVETFSEWIVDKTQFKGALPTIPGMELTDNLMAFVERKLFTLNTGHAITAYLGKLAGHQTIRDAILDESIRAVVKGAMEESGAVLIKRYGFDADKHAAYIQKILGRFENPYLKDDVERVGRQPLRKLSAGDRLIKPLLGTLEYGLPHVNLVKGIAAAMHFRSDEDPQAQELAALITEKGPQAALAQISGLDANSDVVAEAVNAYNATK.

Position 3–14 (3–14 (ALHFGAGNIGRG)) interacts with NAD(+).

Belongs to the mannitol dehydrogenase family.

The catalysed reaction is D-mannitol 1-phosphate + NAD(+) = beta-D-fructose 6-phosphate + NADH + H(+). The sequence is that of Mannitol-1-phosphate 5-dehydrogenase from Salmonella dublin (strain CT_02021853).